Here is a 412-residue protein sequence, read N- to C-terminus: Tyrosine--tRNA ligase (412 aa).

Tyrosine 31 contributes to the L-tyrosine binding site. The 'HIGH' region signature appears at 36 to 45 (PTAPSLHIGH). The L-tyrosine site is built by tyrosine 162 and glutamine 166. The short motif at 222-226 (KIGKT) is the 'KMSKS' region element. Lysine 225 provides a ligand contact to ATP. Positions 345-411 (KRWLDIVVEL…GKRKKQVIDL (67 aa)) constitute an S4 RNA-binding domain.

It belongs to the class-I aminoacyl-tRNA synthetase family. TyrS type 1 subfamily. In terms of assembly, homodimer.

The protein localises to the cytoplasm. The enzyme catalyses tRNA(Tyr) + L-tyrosine + ATP = L-tyrosyl-tRNA(Tyr) + AMP + diphosphate + H(+). In terms of biological role, catalyzes the attachment of tyrosine to tRNA(Tyr) in a two-step reaction: tyrosine is first activated by ATP to form Tyr-AMP and then transferred to the acceptor end of tRNA(Tyr). The polypeptide is Tyrosine--tRNA ligase (Chlamydia trachomatis serovar L2 (strain ATCC VR-902B / DSM 19102 / 434/Bu)).